A 388-amino-acid polypeptide reads, in one-letter code: uncharacterized protein (388 aa).

This sequence belongs to the glycosyltransferase 28 family.

This is an uncharacterized protein from Methanosarcina acetivorans (strain ATCC 35395 / DSM 2834 / JCM 12185 / C2A).